The following is a 350-amino-acid chain: MSRIRLVDSVKAAGUAAKVAPGDLERILAGLPRDPSVEDRVIVGTRHNEDAAVVRLPGGQSIVQTLDFFTPIVNDPYHFGRIAAANALSDVYAMGGEPWCAMNIVCFPVKRLPESILADILRGGSDALREAGAALVGGHSVEDDELKYGLSVTGLIDPEIIASNAGLRPGDHLLLTKPLGTGILATAVKANWPGCDAHEEELFRWASRLNKGAGRVIRELRLKAATDVTGFGLGGHCLEMAGASGVTVALDTAALPVLPGVTELAGMGLVPEGSHANRAHCHKHVHVAPGVSPVLVDVAFDAQTSGGMLLAVSPDQMDAATTLLAETGDPAYPVGEVLKPLPGGVRLLLR.

The active site involves U15. A non-standard amino acid (selenocysteine) is located at residue U15. ATP-binding positions include K18 and 47 to 49 (HNE). D50 is a binding site for Mg(2+). ATP-binding positions include D67, D90, and 138–140 (GHS). D90 is a Mg(2+) binding site. D227 provides a ligand contact to Mg(2+).

It belongs to the selenophosphate synthase 1 family. Class I subfamily. In terms of assembly, homodimer. Mg(2+) serves as cofactor.

It carries out the reaction hydrogenselenide + ATP + H2O = selenophosphate + AMP + phosphate + 2 H(+). Synthesizes selenophosphate from selenide and ATP. This is Selenide, water dikinase from Nitratidesulfovibrio vulgaris (strain DSM 19637 / Miyazaki F) (Desulfovibrio vulgaris).